Consider the following 431-residue polypeptide: Enolase (431 aa).

A (2R)-2-phosphoglycerate-binding site is contributed by Q163. E205 acts as the Proton donor in catalysis. Mg(2+) contacts are provided by D242, E283, and D310. (2R)-2-phosphoglycerate contacts are provided by K335, R364, S365, and K386. Catalysis depends on K335, which acts as the Proton acceptor.

This sequence belongs to the enolase family. Mg(2+) serves as cofactor.

It localises to the cytoplasm. Its subcellular location is the secreted. The protein resides in the cell surface. The catalysed reaction is (2R)-2-phosphoglycerate = phosphoenolpyruvate + H2O. It participates in carbohydrate degradation; glycolysis; pyruvate from D-glyceraldehyde 3-phosphate: step 4/5. Functionally, catalyzes the reversible conversion of 2-phosphoglycerate (2-PG) into phosphoenolpyruvate (PEP). It is essential for the degradation of carbohydrates via glycolysis. The protein is Enolase of Kineococcus radiotolerans (strain ATCC BAA-149 / DSM 14245 / SRS30216).